A 236-amino-acid polypeptide reads, in one-letter code: Cell division protein FtsQ (236 aa).

At 1 to 14 (MWDNHQALNQVADW) the chain is on the cytoplasmic side. The helical transmembrane segment at 15–37 (LFTLAGLTTIYLMVQWTIHLPLL) threads the bilayer. The 75-residue stretch at 37-111 (LPLKEVHIRS…NGLDVVVEEH (75 aa)) folds into the POTRA domain. The Periplasmic portion of the chain corresponds to 38–236 (PLKEVHIRSN…VSGFAARGTR (199 aa)).

It belongs to the FtsQ/DivIB family. FtsQ subfamily. As to quaternary structure, part of a complex composed of FtsB, FtsL and FtsQ.

The protein localises to the cell inner membrane. In terms of biological role, essential cell division protein. May link together the upstream cell division proteins, which are predominantly cytoplasmic, with the downstream cell division proteins, which are predominantly periplasmic. May control correct divisome assembly. The protein is Cell division protein FtsQ of Nitrosospira multiformis (strain ATCC 25196 / NCIMB 11849 / C 71).